The sequence spans 378 residues: Protein RecA (378 aa).

Position 65–72 (65–72) interacts with ATP; that stretch reads GPESSGKT. Positions 325–378 are disordered; that stretch reads AYGMDQTGEEDDQADDKSKDKATKPSDKSQAQAKPKKPVATETSLDLDDSKTDK. The segment covering 339 to 351 has biased composition (basic and acidic residues); sequence DDKSKDKATKPSD.

This sequence belongs to the RecA family.

Its subcellular location is the cytoplasm. Functionally, can catalyze the hydrolysis of ATP in the presence of single-stranded DNA, the ATP-dependent uptake of single-stranded DNA by duplex DNA, and the ATP-dependent hybridization of homologous single-stranded DNAs. It interacts with LexA causing its activation and leading to its autocatalytic cleavage. This chain is Protein RecA, found in Lactiplantibacillus pentosus (Lactobacillus pentosus).